The following is a 159-amino-acid chain: SsrA-binding protein (159 aa).

This sequence belongs to the SmpB family.

The protein localises to the cytoplasm. Required for rescue of stalled ribosomes mediated by trans-translation. Binds to transfer-messenger RNA (tmRNA), required for stable association of tmRNA with ribosomes. tmRNA and SmpB together mimic tRNA shape, replacing the anticodon stem-loop with SmpB. tmRNA is encoded by the ssrA gene; the 2 termini fold to resemble tRNA(Ala) and it encodes a 'tag peptide', a short internal open reading frame. During trans-translation Ala-aminoacylated tmRNA acts like a tRNA, entering the A-site of stalled ribosomes, displacing the stalled mRNA. The ribosome then switches to translate the ORF on the tmRNA; the nascent peptide is terminated with the 'tag peptide' encoded by the tmRNA and targeted for degradation. The ribosome is freed to recommence translation, which seems to be the essential function of trans-translation. The sequence is that of SsrA-binding protein from Coxiella burnetii (strain RSA 493 / Nine Mile phase I).